The chain runs to 347 residues: Protein pelota homolog (347 aa).

It belongs to the eukaryotic release factor 1 family. Pelota subfamily. As to quaternary structure, monomer. It depends on a divalent metal cation as a cofactor.

The protein localises to the cytoplasm. Its function is as follows. May function in recognizing stalled ribosomes, interact with stem-loop structures in stalled mRNA molecules, and effect endonucleolytic cleavage of the mRNA. May play a role in the release non-functional ribosomes and degradation of damaged mRNAs. Has endoribonuclease activity. The chain is Protein pelota homolog from Methanococcoides burtonii (strain DSM 6242 / NBRC 107633 / OCM 468 / ACE-M).